A 319-amino-acid polypeptide reads, in one-letter code: Chromoplast-specific carotenoid-associated protein C1, chromoplastic (319 aa).

Residues 1-55 (MTSIAFWNAFTVNPFPAAARRSPPPLTPFTSGALSPARKPRILEISHPRTLPSFR) constitute a chromoplast transit peptide.

It belongs to the PAP/fibrillin family. As to expression, expressed in flower buds and floral lip tissues. Not detected in roots and leaves. Specifically expressed in conical papillate cells of adaxial epidermis of lip tissues.

Its subcellular location is the plastid. The protein localises to the chromoplast. In terms of biological role, may be involved in carotenoid sequestration within chromoplasts. This Oncidium hybrid cultivar (Orchid) protein is Chromoplast-specific carotenoid-associated protein C1, chromoplastic (CHRC1).